Reading from the N-terminus, the 1001-residue chain is Phosphoenolpyruvate carboxylase (1001 aa).

Catalysis depends on residues His189 and Lys642.

Belongs to the PEPCase type 1 family. Mg(2+) serves as cofactor.

It carries out the reaction oxaloacetate + phosphate = phosphoenolpyruvate + hydrogencarbonate. Its function is as follows. Forms oxaloacetate, a four-carbon dicarboxylic acid source for the tricarboxylic acid cycle. In Prochlorococcus marinus (strain SARG / CCMP1375 / SS120), this protein is Phosphoenolpyruvate carboxylase.